We begin with the raw amino-acid sequence, 315 residues long: Glycine--tRNA ligase alpha subunit (315 aa).

It belongs to the class-II aminoacyl-tRNA synthetase family. In terms of assembly, tetramer of two alpha and two beta subunits.

Its subcellular location is the cytoplasm. The catalysed reaction is tRNA(Gly) + glycine + ATP = glycyl-tRNA(Gly) + AMP + diphosphate. The chain is Glycine--tRNA ligase alpha subunit from Pseudomonas paraeruginosa (strain DSM 24068 / PA7) (Pseudomonas aeruginosa (strain PA7)).